The sequence spans 114 residues: Fumarate reductase subunit D (114 aa).

The next 3 membrane-spanning stretches (helical) occupy residues Ile-27–Val-47, Ile-50–Pro-70, and Trp-94–Leu-114.

This sequence belongs to the FrdD family. As to quaternary structure, part of an enzyme complex containing four subunits: a flavoprotein (FrdA), an iron-sulfur protein (FrdB), and two hydrophobic anchor proteins (FrdC and FrdD).

The protein localises to the cell inner membrane. Anchors the catalytic components of the fumarate reductase complex to the cell membrane, binds quinones. The chain is Fumarate reductase subunit D from Actinobacillus pleuropneumoniae serotype 3 (strain JL03).